We begin with the raw amino-acid sequence, 121 residues long: Large ribosomal subunit protein uL14 (121 aa).

Belongs to the universal ribosomal protein uL14 family. In terms of assembly, part of the 50S ribosomal subunit. Forms a cluster with proteins L3 and L19. In the 70S ribosome, L14 and L19 interact and together make contacts with the 16S rRNA in bridges B5 and B8.

Binds to 23S rRNA. Forms part of two intersubunit bridges in the 70S ribosome. This Legionella pneumophila (strain Corby) protein is Large ribosomal subunit protein uL14.